A 24-amino-acid polypeptide reads, in one-letter code: Cytochrome c3-2 (24 aa).

Residues 1 to 24 are disordered; it reads GNAPAADMVLKAPGDAKMTKTAVP.

Binds 4 heme groups per subunit.

Its subcellular location is the periplasm. In terms of biological role, participates in sulfate respiration coupled with phosphorylation by transferring electrons from the enzyme dehydrogenase to ferredoxin. The chain is Cytochrome c3-2 from Nitratidesulfovibrio vulgaris (Desulfovibrio vulgaris).